A 483-amino-acid polypeptide reads, in one-letter code: Glutamate--tRNA ligase (483 aa).

The short motif at 14-24 (PSPTGDPHVGT) is the 'HIGH' region element. Residues 253–257 (KISKR) carry the 'KMSKS' region motif. Lys-256 contributes to the ATP binding site.

The protein belongs to the class-I aminoacyl-tRNA synthetase family. Glutamate--tRNA ligase type 1 subfamily. In terms of assembly, monomer.

It localises to the cytoplasm. It catalyses the reaction tRNA(Glu) + L-glutamate + ATP = L-glutamyl-tRNA(Glu) + AMP + diphosphate. In terms of biological role, catalyzes the attachment of glutamate to tRNA(Glu) in a two-step reaction: glutamate is first activated by ATP to form Glu-AMP and then transferred to the acceptor end of tRNA(Glu). The protein is Glutamate--tRNA ligase of Deinococcus radiodurans (strain ATCC 13939 / DSM 20539 / JCM 16871 / CCUG 27074 / LMG 4051 / NBRC 15346 / NCIMB 9279 / VKM B-1422 / R1).